The primary structure comprises 301 residues: Phosphate butyryltransferase (301 aa).

Belongs to the phosphate acetyltransferase and butyryltransferase family.

The catalysed reaction is butanoyl-CoA + phosphate = butanoyl phosphate + CoA. Its pathway is lipid metabolism; butanoate metabolism. Catalyzes the conversion of butyryl-CoA through butyryl phosphate to butyrate. The protein is Phosphate butyryltransferase (ptb) of Clostridium acetobutylicum (strain ATCC 824 / DSM 792 / JCM 1419 / IAM 19013 / LMG 5710 / NBRC 13948 / NRRL B-527 / VKM B-1787 / 2291 / W).